Here is a 381-residue protein sequence, read N- to C-terminus: Pulmonary surfactant-associated protein B (381 aa).

The N-terminal stretch at Met-1–Ala-24 is a signal peptide. In terms of domain architecture, Saposin A-type spans Trp-25–Ala-65. The propeptide occupies Trp-25–Gln-200. 3 consecutive Saposin B-type domains span residues Ala-65–Gln-147, Pro-204–Asp-281, and Arg-295–Ser-370. 9 disulfide bridges follow: Cys-69–Cys-143, Cys-72–Cys-137, Cys-100–Cys-112, Cys-208–Cys-277, Cys-211–Cys-271, Cys-235–Cys-246, Cys-299–Cys-366, Cys-302–Cys-360, and Cys-325–Cys-335. N-linked (GlcNAc...) asparagine glycosylation is present at Asn-129. A propeptide spanning residues Asp-280 to Leu-381 is cleaved from the precursor. Asn-311 carries an N-linked (GlcNAc...) asparagine glycan.

As to quaternary structure, homodimer; disulfide-linked.

The protein localises to the secreted. It is found in the extracellular space. The protein resides in the surface film. Its function is as follows. Pulmonary surfactant-associated proteins promote alveolar stability by lowering the surface tension at the air-liquid interface in the peripheral air spaces. SP-B increases the collapse pressure of palmitic acid to nearly 70 millinewtons per meter. This Homo sapiens (Human) protein is Pulmonary surfactant-associated protein B (SFTPB).